Here is a 392-residue protein sequence, read N- to C-terminus: Sex-determining region Y protein (392 aa).

The tract at residues 4-81 is sufficient for interaction with KPNB1; that stretch reads HVKRPMNAFM…YKYQPHRRAK (78 aa). Residues 5–73 constitute a DNA-binding region (HMG box); sequence VKRPMNAFMV…LHREKYPNYK (69 aa). Required for nuclear localization regions lie at residues 6 to 22 and 75 to 81; these read KRPM…ERHK and QPHRRAK. Residues 52–84 are sufficient for interaction with EP300; the sequence is RPFFQEAQRLKILHREKYPNYKYQPHRRAKVSQ. Position 81 is an N6-acetyllysine (Lys81). The tract at residues 92 to 144 is necessary for interaction with ZNF208 isoform KRAB-O; sequence AVASTKLYNLLQWDRNPHAITYRQDWSRAAHLYSKNQQSFYWQPVDIPTGHLQ. The interval 94 to 138 is necessary for interaction with SLC9A3R2 and nuclear accumulation of SLC9A3R2; the sequence is ASTKLYNLLQWDRNPHAITYRQDWSRAAHLYSKNQQSFYWQPVDI. The tract at residues 142 to 361 is disordered; sequence HLQQQQQQQQ…QQQQQQQQQQ (220 aa). Residues 144-181 are compositionally biased toward low complexity; it reads QQQQQQQQQQQFHNHHQQQQQFYDHHQQQQQQQQQQQQ. Basic and acidic residues-rich tracts occupy residues 182–197 and 210–228; these read FHDH…DHHQ and QEQQ…HDHQ. The segment covering 229–238 has biased composition (low complexity); that stretch reads QQQQQQQQQQ. Composition is skewed to basic and acidic residues over residues 239-250, 261-295, and 313-349; these read FHDHHQQKQQFH, FHDH…HDHP, and QFHD…DHHQ. Residues 350–361 show a composition bias toward low complexity; that stretch reads QQQQQQQQQQQQ.

Belongs to the SRY family. In terms of assembly, interacts with KPNB1, ZNF208 isoform KRAB-O, PARP1 and SLC9A3R2. The interaction with KPNB1 is sensitive to dissociation by Ran in the GTP-bound form. Interaction with PARP1 impaired its DNA-binding activity. Interacts with CALM, EP300, HDAC3 and WT1. The interaction with EP300 modulates its DNA-binding activity. Post-translationally, degraded due to the presence of a degron at the C-terminus that promotes its degradation. In terms of processing, phosphorylated on serine residues by PKA. Phosphorylation by PKA enhances its DNA-binding activity and stimulates transcription repression. Acetylation of Lys-81 contributes to its nuclear localization and enhances its interaction with KPNB1. Post-translationally, poly-ADP-ribosylated by PARP1. ADP-ribosylation reduces its DNA-binding activity. Expressed in gonadal somatic pre-Sertoli cells. Expressed in the substantia nigra of the brain (at protein level). Expressed in diencephalon, cortex, the substantia nigra of the midbrain and the medial mammillary bodies of the hypothalamus of male, but not female. As to expression, expressed in gonadal somatic pre-Sertoli cells. While it is expressed at lower level compared to isoform Sry-S, this form is more stable and constitutes the predominant protein product of the Sry locus in XY gonads (at protein level).

The protein localises to the nucleus speckle. Its subcellular location is the cytoplasm. It is found in the nucleus. Its function is as follows. Transcriptional regulator that controls a genetic switch in male development. It is necessary and sufficient for initiating male sex determination by directing the development of supporting cell precursors (pre-Sertoli cells) as Sertoli rather than granulosa cells. Involved in different aspects of gene regulation including promoter activation or repression. Binds to the DNA consensus sequence 5'-[AT]AACAA[AT]-3'. SRY HMG box recognizes DNA by partial intercalation in the minor groove and promotes DNA bending. Also involved in pre-mRNA splicing. In male adult brain involved in the maintenance of motor functions of dopaminergic neurons. Functionally, constitutes the major isoform, which is necessary and sufficient for initiating male sex determination. In terms of biological role, constitutes a minor isoform, which is unstable due to the presence of a degron at the C-terminus that promotes its degradation. Not necessary and sufficient for initiating male sex determination. This is Sex-determining region Y protein from Mus musculus (Mouse).